The chain runs to 149 residues: Large ribosomal subunit protein uL16 (149 aa).

Belongs to the universal ribosomal protein uL16 family. As to quaternary structure, part of the 50S ribosomal subunit.

In terms of biological role, binds 23S rRNA and is also seen to make contacts with the A and possibly P site tRNAs. This is Large ribosomal subunit protein uL16 from Dehalococcoides mccartyi (strain ATCC BAA-2100 / JCM 16839 / KCTC 5957 / BAV1).